Consider the following 116-residue polypeptide: Large ribosomal subunit protein bL20 (116 aa).

It belongs to the bacterial ribosomal protein bL20 family.

Binds directly to 23S ribosomal RNA and is necessary for the in vitro assembly process of the 50S ribosomal subunit. It is not involved in the protein synthesizing functions of that subunit. The sequence is that of Large ribosomal subunit protein bL20 from Acaryochloris marina (strain MBIC 11017).